Reading from the N-terminus, the 704-residue chain is Inhibitor of carbonic anhydrase (704 aa).

A signal peptide spans 1 to 19; the sequence is MRLAFCVLLCAGSLGLCLA. 2 Transferrin-like domains span residues 25–347 and 357–689; these read VRWC…HLRR and VMWC…NVRQ. Intrachain disulfides connect C28/C67, C38/C58, C137/C213, C172/C188, C175/C196, C185/C198, C246/C260, C360/C392, C370/C383, C417/C699, C440/C662, C472/C549, C496/C690, C506/C520, C517/C532, and C589/C603. N491 carries an N-linked (GlcNAc...) asparagine glycan.

The protein belongs to the transferrin family. In terms of assembly, monomer. Interacts (via transferrin-like domain 2) with CA2. N-glycosylated. As to expression, blood plasma (at protein level).

It localises to the secreted. Functionally, inhibitor for carbonic anhydrase 2 (CA2). Does not bind iron ions. This chain is Inhibitor of carbonic anhydrase, found in Sus scrofa (Pig).